We begin with the raw amino-acid sequence, 528 residues long: UDP-glucuronosyltransferase 2A2 (528 aa).

Residues 1-21 form the signal peptide; sequence MIKKVLQLLIFHLTLAEIVLS. The Extracellular segment spans residues 22–494; the sequence is GNVVVWPTDG…FQYHSLDVIG (473 aa). N-linked (GlcNAc...) asparagine glycans are attached at residues asparagine 48 and asparagine 314. A helical transmembrane segment spans residues 495 to 515; the sequence is FLLACVASAILLVAKCCLFIF. At 516–528 the chain is on the cytoplasmic side; sequence QKVGKTGKKKKRD.

This sequence belongs to the UDP-glycosyltransferase family.

It localises to the membrane. The catalysed reaction is glucuronate acceptor + UDP-alpha-D-glucuronate = acceptor beta-D-glucuronoside + UDP + H(+). It catalyses the reaction 17alpha-estradiol + UDP-alpha-D-glucuronate = 17alpha-estradiol 3-O-(beta-D-glucuronate) + UDP + H(+). The enzyme catalyses 17beta-estradiol + UDP-alpha-D-glucuronate = 17beta-estradiol 3-O-(beta-D-glucuronate) + UDP + H(+). It carries out the reaction chenodeoxycholate + UDP-alpha-D-glucuronate = chenodeoxycholoyl-24-O-(beta-D-glucuronate) + UDP. The catalysed reaction is lithocholate + UDP-alpha-D-glucuronate = lithocholoyl-24-O-(beta-D-glucuronate) + UDP. It catalyses the reaction deoxycholate + UDP-alpha-D-glucuronate = deoxycholoyl-24-O-(beta-D-glucuronate) + UDP. The enzyme catalyses hyocholate + UDP-alpha-D-glucuronate = hyocholoyl-24-O-(beta-D-glucuronate) + UDP. It carries out the reaction hyodeoxycholate + UDP-alpha-D-glucuronate = hyodeoxycholate 6-O-(beta-D-glucuronate) + UDP + H(+). Functionally, UDP-glucuronosyltransferase (UGT) that catalyzes phase II biotransformation reactions in which lipophilic substrates are conjugated with glucuronic acid to increase the metabolite's water solubility, thereby facilitating excretion into either the urine or bile. Essential for the elimination and detoxification of drugs, xenobiotics and endogenous compounds. Catalyzes the glucuronidation of endogenous estrogen hormone estradiol. Contributes to bile acid (BA) detoxification by catalyzing the glucuronidation of BA substrates, which are natural detergents for dietary lipids absorption. Potential role in detoxification of toxic waste compounds in the amniotic fluid before birth, and air-born chemical after birth. The chain is UDP-glucuronosyltransferase 2A2 from Mus musculus (Mouse).